Reading from the N-terminus, the 151-residue chain is Melatonin receptor type 1C (151 aa).

The Cytoplasmic portion of the chain corresponds to 1-13; that stretch reads CHSLRYDRLYSRR. The helical transmembrane segment at 14-34 threads the bilayer; that stretch reads NTCLYLLLTWMLTALATVPNF. The Extracellular segment spans residues 35–58; it reads LVGSLKYDPRVFSCTFTQTASSSY. The chain crosses the membrane as a helical span at residues 59–79; the sequence is TVCVVLIHFLVPLGVVSFCYL. The Cytoplasmic segment spans residues 80–109; sequence RIWTLVIRVKGRVRPNPKVRAADLRNFLTM. Residues 110-130 form a helical membrane-spanning segment; it reads FVVFVLFAVCWAPLNFIGLAV. At 131-143 the chain is on the extracellular side; that stretch reads AINPAKVAPNIPE. A helical membrane pass occupies residues 144 to 151; the sequence is WLFVTSYF.

This sequence belongs to the G-protein coupled receptor 1 family.

The protein resides in the cell membrane. In terms of biological role, high affinity receptor for melatonin. The activity of this receptor is mediated by pertussis toxin sensitive G proteins that inhibits adenylate cyclase activity. This chain is Melatonin receptor type 1C (mtnr1c), found in Danio rerio (Zebrafish).